The following is a 445-amino-acid chain: T-box transcription factor TBX20 (445 aa).

The T-box DNA-binding region spans 108–287 (LWDKFHELGT…SNPFAKGFRD (180 aa)). A disordered region spans residues 318 to 337 (EEDVLGEESQTTQSRGSAFT). Over residues 325-337 (ESQTTQSRGSAFT) the composition is skewed to polar residues.

Prominently expressed in the extraembryonic mesoderm, developing heart, eye analage and motor neurons of hindbrain and spinal cord. Expressed in extraembryonic tissues such as the amnion and allantois.

The protein resides in the nucleus. Its function is as follows. Acts as a transcriptional activator and repressor required for cardiac development and may have key roles in the maintenance of functional and structural phenotypes in adult heart. The polypeptide is T-box transcription factor TBX20 (Tbx20) (Mus musculus (Mouse)).